Here is a 158-residue protein sequence, read N- to C-terminus: Lectin-like protein EP153R (158 aa).

Residues 1–26 (MFLNKKYPSLIEKKMDDLMTLKFCYL) lie on the Cytoplasmic side of the membrane. A helical membrane pass occupies residues 27-47 (IITFLIITNIFSLAINIWGGG). Topologically, residues 48 to 158 (DMIDRQSCEN…YTETFFICSN (111 aa)) are extracellular. An intrachain disulfide couples C61 to C72. Residues 61 to 157 (CPKDWVGYNN…KYTETFFICS (97 aa)) are lectin-like. 7 N-linked (GlcNAc...) asparagine; by host glycosylation sites follow: N81, N94, N100, N106, N112, N119, and N139.

This sequence belongs to the asfivirus lectin-like protein family. Homodimer.

It is found in the host endoplasmic reticulum membrane. Down-regulates MHC-I expression by impairing the appropriate configuration or presentation into the plasma membrane of the latter. Participates in viral hemadsorption, which may help viral spread. Reduces the transactivating activity of host TP53, thus inhibiting apoptosis. Non-essential for virus growth in swine macrophage cell cultures. This is Lectin-like protein EP153R from African swine fever virus (isolate Pig/Kenya/KEN-50/1950) (ASFV).